Here is a 109-residue protein sequence, read N- to C-terminus: Co-chaperonin GroES (109 aa).

This sequence belongs to the GroES chaperonin family. Heptamer of 7 subunits arranged in a ring. Interacts with the chaperonin GroEL.

It localises to the cytoplasm. Together with the chaperonin GroEL, plays an essential role in assisting protein folding. The GroEL-GroES system forms a nano-cage that allows encapsulation of the non-native substrate proteins and provides a physical environment optimized to promote and accelerate protein folding. GroES binds to the apical surface of the GroEL ring, thereby capping the opening of the GroEL channel. The chain is Co-chaperonin GroES from Methanosarcina acetivorans (strain ATCC 35395 / DSM 2834 / JCM 12185 / C2A).